The primary structure comprises 284 residues: Stomatin (284 aa).

Topologically, residues 1 to 31 are cytoplasmic; the sequence is MSDKRQSSHVQSQRIPESFRENSKTELGACG. Residue Ser-18 is modified to Phosphoserine. Cys-30 is lipidated: S-palmitoyl cysteine. An intramembrane segment occupies 32-52; that stretch reads WILVAASFFFVIITFPISIWI. The Cytoplasmic segment spans residues 53-284; that stretch reads CIKIVKEYER…MLQGIMGSNH (232 aa). The S-palmitoyl cysteine moiety is linked to residue Cys-87. Residues Ser-161 and Ser-244 each carry the phosphoserine modification. Residues 265–273 form a required for homooligomerization region; it reads STIVFPLPV. The required for lipid raft association stretch occupies residues 267-269; that stretch reads IVF. The tract at residues 273 to 284 is interaction with LANCL1; it reads VDMLQGIMGSNH.

This sequence belongs to the band 7/mec-2 family. Interacts with LANCL1. Interacts with SLC2A1. Interacts with SLC4A1; this interaction positively regulates SLC4A1 activity. Identified in large complexes with SLC40A1, SLC14A1, SLC29A1 and AQP1. Homodimer and higher order homooligomers. The homodimer is banana-shaped. Interacts with ASIC1, ASIC2 and ASIC3. Interacts with STOML1; may redistribute STOM from the plasma membrane to late endosomes. As to expression, expressed in all sensory neurons of the dorsal root ganglia. In the CNS, expressed in many neurons of the spinal cord, medulla and pons. Expressed only in scattered neurons in the cortex, hippocampus, thalamus and basal ganglia. In the cerebellum, expressed in all Purkinje cells (at protein level). Widely expressed with high levels in heart, liver, skeletal muscle and testis and low levels in lung, brain and spleen.

The protein resides in the cell membrane. It is found in the cytoplasm. It localises to the cytoskeleton. Its subcellular location is the membrane raft. The protein localises to the melanosome. The protein resides in the cytoplasmic vesicle. Regulates ion channel activity and transmembrane ion transport. Regulates ASIC2 and ASIC3 channel activity. In Mus musculus (Mouse), this protein is Stomatin.